A 238-amino-acid chain; its full sequence is Insulin-like growth factor-binding protein 6 (238 aa).

Residues 1-25 (MTWDGLPTQPLLMLLMLLFAAGSGS) form the signal peptide. The IGFBP N-terminal domain occupies 26–108 (ALAGCPGCGA…LIGQGRCQRA (83 aa)). Intrachain disulfides connect Cys-30-Cys-33, Cys-41-Cys-45, Cys-58-Cys-64, Cys-72-Cys-85, and Cys-79-Cys-105. The tract at residues 104–159 (RCQRARGPSEETTKESKPQGGASRSRDTNHRDRQKNPRTSAAPIRPNPVQDSEMGP) is disordered. Composition is skewed to basic and acidic residues over residues 110-120 (GPSEETTKESK) and 127-138 (RSRDTNHRDRQK). One can recognise a Thyroglobulin type-1 domain in the interval 157–232 (MGPCRRHLDS…SPDGQGSTQC (76 aa)). Cystine bridges form between Cys-160–Cys-188, Cys-199–Cys-210, and Cys-212–Cys-232. Residues 218–238 (QPLPVSPDGQGSTQCSARSSG) form a disordered region. Residues 226–238 (GQGSTQCSARSSG) are compositionally biased toward polar residues.

Interacts (via C-terminal domain) with PHB2. O-glycosylated.

The protein localises to the secreted. Functionally, IGF-binding proteins prolong the half-life of the IGFs and have been shown to either inhibit or stimulate the growth promoting effects of the IGFs on cell culture. They alter the interaction of IGFs with their cell surface receptors. Activates the MAPK signaling pathway and induces cell migration. This chain is Insulin-like growth factor-binding protein 6 (Igfbp6), found in Mus musculus (Mouse).